Here is a 754-residue protein sequence, read N- to C-terminus: NAD(P)H-quinone oxidoreductase subunit 5, chloroplastic (754 aa).

The next 16 membrane-spanning stretches (helical) occupy residues 8–28, 40–60, 89–109, 125–145, 147–167, 185–205, 219–239, 258–278, 280–300, 327–347, 354–374, 396–416, 425–445, 552–572, 608–628, and 733–753; these read FWIITFISLPVPILIGVGLLL, WVFPSVLLLSIIMLFSTYLAI, VDPLTSIMLILITTVGILVLI, FAYMSFFNTSMVGLVTSSNLI, IYFFWELVGMCSYLLIGFWFT, GDFGLLLGILGFYWITGSLEF, NEVNLLFATLCAFLLFAGAIA, TPISALIHAATMVAAGIFLGA, LLPLFIVMPYIMNLIALLGII, LGYMMLALGMGSYRAALFHLI, ALLFLGSGSIIHSMESIVGYS, TSFLLGTLSLCGIPPLGCFWS, WLYSPIFAIIAFSTAGLTAFY, FSMLVLGLFTLFIGIIGIPFF, FITNATYSVSIASFGILIASF, and LVYISYVLIFLLIYSRGVLFF.

This sequence belongs to the complex I subunit 5 family. In terms of assembly, NDH is composed of at least 16 different subunits, 5 of which are encoded in the nucleus.

The protein resides in the plastid. Its subcellular location is the chloroplast thylakoid membrane. It catalyses the reaction a plastoquinone + NADH + (n+1) H(+)(in) = a plastoquinol + NAD(+) + n H(+)(out). It carries out the reaction a plastoquinone + NADPH + (n+1) H(+)(in) = a plastoquinol + NADP(+) + n H(+)(out). Functionally, NDH shuttles electrons from NAD(P)H:plastoquinone, via FMN and iron-sulfur (Fe-S) centers, to quinones in the photosynthetic chain and possibly in a chloroplast respiratory chain. The immediate electron acceptor for the enzyme in this species is believed to be plastoquinone. Couples the redox reaction to proton translocation, and thus conserves the redox energy in a proton gradient. This is NAD(P)H-quinone oxidoreductase subunit 5, chloroplastic (ndhF) from Morus indica (Mulberry).